The primary structure comprises 42 residues: Photosystem I reaction center subunit IX (42 aa).

Residues 7-27 (YLSTAPVLSALWFAILAGLLI) traverse the membrane as a helical segment.

Belongs to the PsaJ family.

The protein resides in the plastid. It is found in the chloroplast thylakoid membrane. Functionally, may help in the organization of the PsaE and PsaF subunits. The sequence is that of Photosystem I reaction center subunit IX from Chlorokybus atmophyticus (Soil alga).